Reading from the N-terminus, the 663-residue chain is Probable receptor-like protein kinase At1g49730 (663 aa).

Positions 1 to 25 (MVVNSQAFLLALIALLATQLPSLMA) are cleaved as a signal peptide. Topologically, residues 26–254 (ADCPLDFSGS…TNPYHLTMVP (229 aa)) are extracellular. 5 N-linked (GlcNAc...) asparagine glycosylation sites follow: Asn36, Asn46, Asn70, Asn101, and Asn171. The segment at 213 to 243 (SFSPVASPEPSPSTVGGISPSNSDSQMTTSR) is disordered. Positions 224-243 (PSTVGGISPSNSDSQMTTSR) are enriched in polar residues. Residues 255 to 275 (TIGIVVTAVALTMLVVLVILI) traverse the membrane as a helical segment. The Cytoplasmic segment spans residues 276-663 (RRKNRELDES…PHSPINGFSF (388 aa)). The 283-residue stretch at 327–609 (NDFNTVIGQG…ESCDPVHSAF (283 aa)) folds into the Protein kinase domain. Residues 333-341 (IGQGGFGTV) and Lys355 contribute to the ATP site. Residue Asp451 is the Proton acceptor of the active site. The tract at residues 631-663 (RGDSRIFGPSSSTTSRSHYSRSLPHSPINGFSF) is disordered. Positions 640–652 (SSSTTSRSHYSRS) are enriched in low complexity.

Belongs to the protein kinase superfamily. Ser/Thr protein kinase family.

It is found in the cell membrane. The catalysed reaction is L-seryl-[protein] + ATP = O-phospho-L-seryl-[protein] + ADP + H(+). It carries out the reaction L-threonyl-[protein] + ATP = O-phospho-L-threonyl-[protein] + ADP + H(+). This is Probable receptor-like protein kinase At1g49730 from Arabidopsis thaliana (Mouse-ear cress).